A 449-amino-acid polypeptide reads, in one-letter code: Tubulin alpha chain (449 aa).

GTP contacts are provided by glutamine 11, glutamate 71, serine 140, glycine 144, threonine 145, threonine 179, asparagine 206, and asparagine 228. Residue glutamate 71 participates in Mg(2+) binding. The active site involves glutamate 254.

Belongs to the tubulin family. Dimer of alpha and beta chains. A typical microtubule is a hollow water-filled tube with an outer diameter of 25 nm and an inner diameter of 15 nM. Alpha-beta heterodimers associate head-to-tail to form protofilaments running lengthwise along the microtubule wall with the beta-tubulin subunit facing the microtubule plus end conferring a structural polarity. Microtubules usually have 13 protofilaments but different protofilament numbers can be found in some organisms and specialized cells. The cofactor is Mg(2+).

Its subcellular location is the cytoplasm. It localises to the cytoskeleton. It carries out the reaction GTP + H2O = GDP + phosphate + H(+). Tubulin is the major constituent of microtubules, a cylinder consisting of laterally associated linear protofilaments composed of alpha- and beta-tubulin heterodimers. Microtubules grow by the addition of GTP-tubulin dimers to the microtubule end, where a stabilizing cap forms. Below the cap, tubulin dimers are in GDP-bound state, owing to GTPase activity of alpha-tubulin. The polypeptide is Tubulin alpha chain (TUB1) (Pneumocystis carinii).